The sequence spans 224 residues: Ribose-5-phosphate isomerase A (224 aa).

Residues 32–35 (TGST), 85–88 (DGAD), and 98–101 (KGGG) each bind substrate. The Proton acceptor role is filled by Glu-107. Lys-125 is a binding site for substrate.

This sequence belongs to the ribose 5-phosphate isomerase family. In terms of assembly, homodimer.

It carries out the reaction aldehydo-D-ribose 5-phosphate = D-ribulose 5-phosphate. Its pathway is carbohydrate degradation; pentose phosphate pathway; D-ribose 5-phosphate from D-ribulose 5-phosphate (non-oxidative stage): step 1/1. In terms of biological role, catalyzes the reversible conversion of ribose-5-phosphate to ribulose 5-phosphate. This chain is Ribose-5-phosphate isomerase A, found in Pseudomonas putida (strain W619).